Here is a 944-residue protein sequence, read N- to C-terminus: Protein unc-45 homolog A (944 aa).

The interval 1–25 (MTVSGPETPEPRPSDPGASSAEQLR) is disordered. 3 TPR repeats span residues 21–54 (AEQL…GATP), 58–91 (AILH…DGGD), and 92–125 (VKAL…EPKN). Lysine 70 carries the N6-acetyllysine modification. Lysine 483 is modified (N6-acetyllysine).

As to quaternary structure, interacts with PGR isoforms A and B as well as with NR3C1 in the absence of ligand, and with HSP90AB1. Binding to HSP90AB1 involves 2 UNC45A monomers per HSP90AB1 dimer. As to expression, detected in spleen, bone marrow, lung and ovary, and at lower levels in testis, kidney, heart and brain (at protein level). Ubiquitous. Detected in uterus, large intestine, kidney, spleen, lung, brain, liver and ovary.

The protein resides in the cytoplasm. The protein localises to the perinuclear region. It localises to the nucleus. Functionally, may act as co-chaperone for HSP90 (Potential). Prevents the stimulation of HSP90AB1 ATPase activity by AHSA1. Positive factor in promoting PGR function in the cell. May be necessary for proper folding of myosin (Potential). Necessary for normal cell proliferation. Necessary for normal myotube formation and myosin accumulation during muscle cell development. May play a role in erythropoiesis in stroma cells in the spleen. This is Protein unc-45 homolog A (Unc45a) from Mus musculus (Mouse).